The chain runs to 877 residues: Alanine--tRNA ligase (877 aa).

Positions 565, 569, 667, and 671 each coordinate Zn(2+).

The protein belongs to the class-II aminoacyl-tRNA synthetase family. The cofactor is Zn(2+).

It is found in the cytoplasm. The enzyme catalyses tRNA(Ala) + L-alanine + ATP = L-alanyl-tRNA(Ala) + AMP + diphosphate. Functionally, catalyzes the attachment of alanine to tRNA(Ala) in a two-step reaction: alanine is first activated by ATP to form Ala-AMP and then transferred to the acceptor end of tRNA(Ala). Also edits incorrectly charged Ser-tRNA(Ala) and Gly-tRNA(Ala) via its editing domain. This Acidithiobacillus ferridurans protein is Alanine--tRNA ligase.